A 207-amino-acid chain; its full sequence is Large ribosomal subunit protein bL25 (207 aa).

This sequence belongs to the bacterial ribosomal protein bL25 family. CTC subfamily. Part of the 50S ribosomal subunit; part of the 5S rRNA/L5/L18/L25 subcomplex. Contacts the 5S rRNA. Binds to the 5S rRNA independently of L5 and L18.

This is one of the proteins that binds to the 5S RNA in the ribosome where it forms part of the central protuberance. In Dictyoglomus thermophilum (strain ATCC 35947 / DSM 3960 / H-6-12), this protein is Large ribosomal subunit protein bL25.